Reading from the N-terminus, the 201-residue chain is Adenylyl-sulfate kinase (201 aa).

35 to 42 (GLSGSGKS) serves as a coordination point for ATP. Residue Ser-109 is the Phosphoserine intermediate of the active site.

It belongs to the APS kinase family.

It catalyses the reaction adenosine 5'-phosphosulfate + ATP = 3'-phosphoadenylyl sulfate + ADP + H(+). Its pathway is sulfur metabolism; hydrogen sulfide biosynthesis; sulfite from sulfate: step 2/3. Functionally, catalyzes the synthesis of activated sulfate. This chain is Adenylyl-sulfate kinase, found in Shigella flexneri.